The primary structure comprises 38 residues: Photosystem II reaction center protein L (38 aa).

Residues 17–37 (SLYWGLLLIFVLAVLFSNYFF) traverse the membrane as a helical segment.

Belongs to the PsbL family. In terms of assembly, PSII is composed of 1 copy each of membrane proteins PsbA, PsbB, PsbC, PsbD, PsbE, PsbF, PsbH, PsbI, PsbJ, PsbK, PsbL, PsbM, PsbT, PsbX, PsbY, PsbZ, Psb30/Ycf12, at least 3 peripheral proteins of the oxygen-evolving complex and a large number of cofactors. It forms dimeric complexes.

The protein localises to the plastid. Its subcellular location is the chloroplast thylakoid membrane. One of the components of the core complex of photosystem II (PSII). PSII is a light-driven water:plastoquinone oxidoreductase that uses light energy to abstract electrons from H(2)O, generating O(2) and a proton gradient subsequently used for ATP formation. It consists of a core antenna complex that captures photons, and an electron transfer chain that converts photonic excitation into a charge separation. This subunit is found at the monomer-monomer interface and is required for correct PSII assembly and/or dimerization. This chain is Photosystem II reaction center protein L, found in Angiopteris evecta (Mule's foot fern).